Reading from the N-terminus, the 428-residue chain is UPF0229 protein YeaH (428 aa).

Over residues 77 to 90 the composition is skewed to basic and acidic residues; that stretch reads PGNDHFIQNDRIER. A disordered region spans residues 77 to 111; that stretch reads PGNDHFIQNDRIERPQSGGGGGSGSGQGQASQDGE. Gly residues predominate over residues 93-103; that stretch reads SGGGGGSGSGQ.

The protein belongs to the UPF0229 family.

The polypeptide is UPF0229 protein YeaH (Salmonella typhi).